We begin with the raw amino-acid sequence, 225 residues long: Global nitrogen regulator (225 aa).

An a nucleoside 3',5'-cyclic phosphate-binding site is contributed by 9-131 (RPLAAVFRRL…LLMLQGLSSR (123 aa)). The HTH crp-type domain maps to 145–218 (RDMGSRLVSF…KKKITVHNPV (74 aa)). Residues 177 to 196 (SHQAIAEAIGSTRVTVTRLL) constitute a DNA-binding region (H-T-H motif).

Functionally, required for full expression of proteins subject to ammonium repression. Transcriptional activator of genes subject to nitrogen control. This is Global nitrogen regulator (ntcA) from Synechocystis sp. (strain ATCC 27184 / PCC 6803 / Kazusa).